Here is a 142-residue protein sequence, read N- to C-terminus: Transcriptional regulator MraZ (142 aa).

SpoVT-AbrB domains are found at residues A5 to E51 and A77 to T120.

It belongs to the MraZ family. Forms oligomers.

The protein resides in the cytoplasm. The protein localises to the nucleoid. The chain is Transcriptional regulator MraZ from Burkholderia multivorans (strain ATCC 17616 / 249).